A 563-amino-acid chain; its full sequence is Arginine--tRNA ligase (563 aa).

The 'HIGH' region motif lies at 121-131 (PNIAKPFSIGH).

This sequence belongs to the class-I aminoacyl-tRNA synthetase family. Monomer.

Its subcellular location is the cytoplasm. It carries out the reaction tRNA(Arg) + L-arginine + ATP = L-arginyl-tRNA(Arg) + AMP + diphosphate. The protein is Arginine--tRNA ligase of Streptococcus pneumoniae (strain ATCC BAA-255 / R6).